The primary structure comprises 234 residues: Elongation factor Tu (234 aa).

The tr-type G domain maps to 1 to 125 (KNMITGAAQM…EVDAFIPTPE (125 aa)). 47–50 (NKQD) contacts GTP.

Belongs to the TRAFAC class translation factor GTPase superfamily. Classic translation factor GTPase family. EF-Tu/EF-1A subfamily. Monomer.

The protein resides in the cytoplasm. It carries out the reaction GTP + H2O = GDP + phosphate + H(+). In terms of biological role, GTP hydrolase that promotes the GTP-dependent binding of aminoacyl-tRNA to the A-site of ribosomes during protein biosynthesis. In Prochlorothrix hollandica, this protein is Elongation factor Tu (tufA).